We begin with the raw amino-acid sequence, 258 residues long: L-aminoadipate-semialdehyde dehydrogenase-phosphopantetheinyl transferase (258 aa).

The protein belongs to the P-Pant transferase superfamily. AcpS family.

It carries out the reaction apo-[ACP] + CoA = holo-[ACP] + adenosine 3',5'-bisphosphate + H(+). Functionally, catalyzes the transfer of a 4'-phosphopantetheine moiety from coenzyme A to a serine residue of acceptor proteins, such as alpha-aminoadipate reductase. Necessary for alpha-aminoadipate reductase activity. The chain is L-aminoadipate-semialdehyde dehydrogenase-phosphopantetheinyl transferase (LYS5) from Candida glabrata (strain ATCC 2001 / BCRC 20586 / JCM 3761 / NBRC 0622 / NRRL Y-65 / CBS 138) (Yeast).